The sequence spans 112 residues: uncharacterized protein (112 aa).

An HIT domain is found at 5-112; that stretch reads IFQKIIKGII…LLGGKKLNKI (108 aa). The short motif at 98-102 is the Histidine triad motif element; the sequence is HLHLH.

This is an uncharacterized protein from Buchnera aphidicola subsp. Baizongia pistaciae (strain Bp).